Consider the following 148-residue polypeptide: Ribosomal RNA large subunit methyltransferase H (148 aa).

S-adenosyl-L-methionine is bound by residues Leu62, Gly94, and 113–118 (LSLLTL).

The protein belongs to the RNA methyltransferase RlmH family. As to quaternary structure, homodimer.

The protein resides in the cytoplasm. The enzyme catalyses pseudouridine(1915) in 23S rRNA + S-adenosyl-L-methionine = N(3)-methylpseudouridine(1915) in 23S rRNA + S-adenosyl-L-homocysteine + H(+). Functionally, specifically methylates the pseudouridine at position 1915 (m3Psi1915) in 23S rRNA. The protein is Ribosomal RNA large subunit methyltransferase H of Deinococcus geothermalis (strain DSM 11300 / CIP 105573 / AG-3a).